We begin with the raw amino-acid sequence, 698 residues long: Elongation factor G 1 (698 aa).

The region spanning 8 to 290 (ERYRNIGICA…AVVEFLPAPV (283 aa)) is the tr-type G domain. Residues 17–24 (AHVDAGKT), 88–92 (DTPGH), and 142–145 (NKMD) each bind GTP.

Belongs to the TRAFAC class translation factor GTPase superfamily. Classic translation factor GTPase family. EF-G/EF-2 subfamily.

It localises to the cytoplasm. Its function is as follows. Catalyzes the GTP-dependent ribosomal translocation step during translation elongation. During this step, the ribosome changes from the pre-translocational (PRE) to the post-translocational (POST) state as the newly formed A-site-bound peptidyl-tRNA and P-site-bound deacylated tRNA move to the P and E sites, respectively. Catalyzes the coordinated movement of the two tRNA molecules, the mRNA and conformational changes in the ribosome. In Shewanella sp. (strain MR-4), this protein is Elongation factor G 1.